Reading from the N-terminus, the 862-residue chain is Rho guanine nucleotide exchange factor 7 (862 aa).

Residues 1–112 (MNSAEQTVTW…SLVTLNKVTA (112 aa)) enclose the Calponin-homology (CH) domain. Ser-132, Ser-155, Ser-164, Ser-228, and Ser-236 each carry phosphoserine. The SH3 domain maps to 163–222 (NSQLVVRAKFNFQQTNEDELSFSKGDVIHVTRVEEGGWWEGTHNGRTGWFPSNYVREIKP). Residues 250 to 430 (YYNVVLQNIL…KNLSAQCQEV (181 aa)) form the DH domain. The PH domain occupies 452 to 557 (DIKTLGSVTY…WVEHLQKQTK (106 aa)). Position 497 is a phosphoserine (Ser-497). Disordered regions lie at residues 559 to 591 (TSVSNPTIKPHSVPSHTLPSHPLTPSSKHADSK), 657 to 679 (KTMKKLLPKRKPERKPSDEEFAV), and 728 to 748 (DQSSLDSLGRRSSLSRLEPSD). Over residues 572 to 585 (PSHTLPSHPLTPSS) the composition is skewed to polar residues. Residues 657–669 (KTMKKLLPKRKPE) show a composition bias toward basic residues. The span at 670–679 (RKPSDEEFAV) shows a compositional bias: basic and acidic residues. At Ser-673 the chain carries Phosphoserine. Positions 731-744 (SLDSLGRRSSLSRL) are enriched in low complexity. At Ser-776 the chain carries Phosphoserine. Positions 804–854 (KSLVDTVYALKDEVQELRQDNKKMKKSLEEEQRARKDLEKLVRKVLKNMND) form a coiled coil.

As to quaternary structure, interacts with PAK kinases through the SH3 domain. Interacts with unphosphorylated PAK1. Interacts with ITCH. Interacts with SCRIB; interaction is direct and may play a role in regulation of apoptosis. Interacts with GIT1 and TGFB1I1. Interacts with FRMPD4 (via N-terminus). Interacts with CaMK1. Interacts with BIN2. Interacts with PTK2/FAK1 and RAC1. Interacts with PARVB. Interacts with YWHAZ. Interacts (via PH domain) with NOX1 (via FAD-binding FR-type domain). In terms of processing, phosphorylated on Ser-673 by CaMK1; enhancement of GEF activity and downstream activation of RAC1. Phosphorylated by PTK2/FAK1; this promotes interaction with RAC1. Seems to be expressed in the central nervous system. Isoform B, isoform C and isoform E are expressed with highest levels in brain and testis.

The protein resides in the cell junction. Its subcellular location is the focal adhesion. It localises to the cell projection. It is found in the ruffle. The protein localises to the cytoplasm. The protein resides in the cell cortex. Its subcellular location is the lamellipodium. In terms of biological role, acts as a RAC1 guanine nucleotide exchange factor (GEF) and can induce membrane ruffling. May function as a positive regulator of apoptosis. Functions in cell migration, attachment and cell spreading. Promotes targeting of RAC1 to focal adhesions. Downstream of NMDA receptors and CaMKK-CaMK1 signaling cascade, promotes the formation of spines and synapses in hippocampal neurons. The sequence is that of Rho guanine nucleotide exchange factor 7 (Arhgef7) from Mus musculus (Mouse).